A 169-amino-acid chain; its full sequence is Small ribosomal subunit protein uS5 (169 aa).

The S5 DRBM domain occupies 14 to 77 (MKEQVVDIRR…QAAKKNLLLV (64 aa)).

It belongs to the universal ribosomal protein uS5 family. In terms of assembly, part of the 30S ribosomal subunit. Contacts proteins S4 and S8.

With S4 and S12 plays an important role in translational accuracy. Functionally, located at the back of the 30S subunit body where it stabilizes the conformation of the head with respect to the body. The protein is Small ribosomal subunit protein uS5 of Alkaliphilus metalliredigens (strain QYMF).